A 503-amino-acid polypeptide reads, in one-letter code: Putative ribose/galactose/methyl galactoside import ATP-binding protein (503 aa).

ABC transporter domains follow at residues 7–244 (LEMI…VGRE) and 254–498 (VPIG…TGQL). An ATP-binding site is contributed by 39 to 46 (GENGAGKS).

This sequence belongs to the ABC transporter superfamily. Carbohydrate importer 2 (CUT2) (TC 3.A.1.2) family.

It localises to the cell membrane. It carries out the reaction D-ribose(out) + ATP + H2O = D-ribose(in) + ADP + phosphate + H(+). The enzyme catalyses D-galactose(out) + ATP + H2O = D-galactose(in) + ADP + phosphate + H(+). In terms of biological role, part of an ABC transporter complex involved in carbohydrate import. Could be involved in ribose, galactose and/or methyl galactoside import. Responsible for energy coupling to the transport system. The chain is Putative ribose/galactose/methyl galactoside import ATP-binding protein from Geobacillus kaustophilus (strain HTA426).